The sequence spans 519 residues: Dolichol kinase (519 aa).

At Met1 to Asp47 the chain is on the cytoplasmic side. A helical transmembrane segment spans residues Phe48–Cys68. Residues Val69–Phe88 are Lumenal-facing. The helical transmembrane segment at Val89–His109 threads the bilayer. Over Gly110 to Asp118 the chain is Cytoplasmic. Residues Thr119–Val139 traverse the membrane as a helical segment. Topologically, residues Ile140 to Ser151 are lumenal. A helical transmembrane segment spans residues Tyr152–Phe172. Topologically, residues Glu173–Ile181 are cytoplasmic. Residues Ile182–Leu203 traverse the membrane as a helical segment. Residues Asp204–Glu223 lie on the Lumenal side of the membrane. The chain crosses the membrane as a helical span at residues Ala224 to Ser244. The Cytoplasmic segment spans residues Ile245–Met253. A helical membrane pass occupies residues His254–Thr274. Residues Phe275 to Glu294 lie on the Lumenal side of the membrane. A helical transmembrane segment spans residues Ser295–Ser315. Topologically, residues Ile316–Asn326 are cytoplasmic. Residues Thr327 to Asp347 traverse the membrane as a helical segment. At Ser348–Asn349 the chain is on the lumenal side. The chain crosses the membrane as a helical span at residues Phe350–Phe370. The Cytoplasmic segment spans residues Gln371–Ser394. A helical transmembrane segment spans residues Gly395–Asn415. Over Asn416 to Ser417 the chain is Lumenal. The helical transmembrane segment at Pro418–Tyr438 threads the bilayer. Over Gly439–Thr449 the chain is Cytoplasmic. The helical transmembrane segment at Leu450–Phe470 threads the bilayer. Residues Asp471–Lys472 are Lumenal-facing. A helical transmembrane segment spans residues Ala473–Val493. Topologically, residues Leu494 to Leu519 are cytoplasmic.

Belongs to the polyprenol kinase family.

The protein resides in the endoplasmic reticulum membrane. It carries out the reaction a di-trans,poly-cis-dolichol + CTP = a di-trans,poly-cis-dolichyl phosphate + CDP + H(+). It functions in the pathway protein modification; protein glycosylation. Functionally, catalyzes CTP-mediated phosphorylation of dolichol, the terminal step in de novo dolichyl monophosphate (Dol-P) biosynthesis. Dol-P is a lipid carrier essential for the synthesis of N-linked and O-linked oligosaccharides and for GPI anchors. This Saccharomyces cerevisiae (strain ATCC 204508 / S288c) (Baker's yeast) protein is Dolichol kinase (SEC59).